A 693-amino-acid chain; its full sequence is Endoprotease bli (693 aa).

The N-terminal stretch at 1-20 (MYWQLVRILVLFDCLQKILA) is a signal peptide. The propeptide at 21-116 (IEHDSICIAD…EQRPRVRRKR (96 aa)) is inhibition peptide. A Ca(2+)-binding site is contributed by D161. A Peptidase S8 domain is found at 167 to 482 (QWYLNNGAQG…YGLMDAGALV (316 aa)). N-linked (GlcNAc...) asparagine glycosylation is present at N194. Residue D201 is the Charge relay system of the active site. D202 contributes to the substrate binding site. Residues D210, D222, D227, and D229 each coordinate Ca(2+). The segment at 215–242 (YDPLASTDINGHDDDPTPQDDGDNKHGT) is disordered. 237–238 (DN) provides a ligand contact to substrate. The active-site Charge relay system is H240. Residues I251, N254, Y256, and G258 each contribute to the Ca(2+) site. Cystine bridges form between C257–C406 and C349–C379. Substrate contacts are provided by residues E282, 299–304 (SWGPED), D310, and 338–341 (ASGN). D304 serves as a coordination point for Ca(2+). Position 347 (D347) interacts with Ca(2+). Substrate contacts are provided by D352 and Y354. E377 contributes to the Ca(2+) binding site. The Charge relay system role is filled by S414. S414 contributes to the substrate binding site. N-linked (GlcNAc...) asparagine glycans are attached at residues N433 and N518. The region spanning 490–628 (TVPEQHICTY…SLLLYGTAEP (139 aa)) is the P/Homo B domain. A disulfide bridge connects residues C497 and C526. Residues 629 to 693 (AQPNDPRHSS…LVSAQPELRV (65 aa)) are disordered. The segment covering 668-681 (DSRDWQPKKVENKK) has biased composition (basic and acidic residues).

This sequence belongs to the peptidase S8 family. Furin subfamily. It depends on Ca(2+) as a cofactor. Post-translationally, N-glycosylated. In terms of processing, the inhibition peptide, which plays the role of an intramolecular chaperone, is probably autocatalytically removed in the endoplasmic reticulum (ER) and remains non-covalently bound as a potent autoinhibitor. Probably following transport to the trans Golgi, a second cleavage within the inhibition propeptide results in propeptide dissociation and bli activation.

The protein resides in the secreted. The enzyme catalyses Release of mature proteins from their proproteins by cleavage of -Arg-Xaa-Yaa-Arg-|-Zaa- bonds, where Xaa can be any amino acid and Yaa is Arg or Lys. Releases albumin, complement component C3 and von Willebrand factor from their respective precursors.. With respect to regulation, inhibited by the propeptide before the second cleavage. Inhibited by ethylenediaminetetraacetic acid (EDTA), ZnSO(4) and chloroketone DEC-RVKR-CMK. In terms of biological role, serine endoprotease which cleaves substrates at the RX(K/R)R consensus motif. This Onchocerca volvulus protein is Endoprotease bli.